A 125-amino-acid polypeptide reads, in one-letter code: Small ribosomal subunit protein uS13 (125 aa).

This sequence belongs to the universal ribosomal protein uS13 family. Part of the 30S ribosomal subunit. Forms a loose heterodimer with protein S19. Forms two bridges to the 50S subunit in the 70S ribosome.

Located at the top of the head of the 30S subunit, it contacts several helices of the 16S rRNA. In the 70S ribosome it contacts the 23S rRNA (bridge B1a) and protein L5 of the 50S subunit (bridge B1b), connecting the 2 subunits; these bridges are implicated in subunit movement. Contacts the tRNAs in the A and P-sites. This is Small ribosomal subunit protein uS13 from Orientia tsutsugamushi (strain Boryong) (Rickettsia tsutsugamushi).